The sequence spans 502 residues: Lysine--tRNA ligase (502 aa).

The Mg(2+) site is built by Glu-412 and Glu-419.

Belongs to the class-II aminoacyl-tRNA synthetase family. In terms of assembly, homodimer. Mg(2+) is required as a cofactor.

The protein localises to the cytoplasm. It carries out the reaction tRNA(Lys) + L-lysine + ATP = L-lysyl-tRNA(Lys) + AMP + diphosphate. The polypeptide is Lysine--tRNA ligase (Buchnera aphidicola subsp. Cinara cedri (strain Cc)).